The primary structure comprises 568 residues: MGSSKSKPKDPSQRRRSLEPPDSTHHGGFPASQTPNKTAAPDTHRTPSRSFGTVATEPKLFGGFNTSDTVTSPQRAGALAGGVTTFVALYDYESRTETDLSFKKGERLQIVNNTEGDWWLAHSLTTGQTGYIPSNYVAPSDSIQAEEWYFGKITRRESERLLLNPENPRGTFLVRESETTKGAYCLSVSDFDNARGLNVKHYKIRKLDSGGFYITSRTQFSSLQQLVAYYSKHADGLCHRLTNVCPTSKPQTQGLAKDAWEIPRESLRLEVKLGQGCFGEVWMGTWNGTTRVAIKTLKPGTMSPEAFLQEAQVMKKLRHEKLVRLYAVVSEEPIYIVTEYMSKGSLLDFLKGEMGKYLRLPQLVDMAAQIASGMAYVERMNYVHRDLRAANILVGENLVCKVADFGLARLIEDNEYTARQGAKFPIKWTAPEAALYGRFTIKSDVWSFGILLTELTTKGRVPYPGMVNREVLDQVERGYRMPCPPECPESLHDLMCQCWRKDPEERPTFEYLQAFLEDYFTSTEPTAVHMATDPGKYTTAHKSRARVSSNTAVARPAAPVRVLLKPSV.

Residues 1-58 (MGSSKSKPKDPSQRRRSLEPPDSTHHGGFPASQTPNKTAAPDTHRTPSRSFGTVATEP) form a disordered region. Gly-2 carries N-myristoyl glycine; by host lipidation. Residues 7–25 (KPKDPSQRRRSLEPPDSTH) are compositionally biased toward basic and acidic residues. Residues 81-142 (GGVTTFVALY…PSNYVAPSDS (62 aa)) form the SH3 domain. One can recognise an SH2 domain in the interval 148-245 (WYFGKITRRE…GLCHRLTNVC (98 aa)). Residues 267-520 (LRLEVKLGQG…YLQAFLEDYF (254 aa)) enclose the Protein kinase domain. ATP is bound by residues 273-281 (LGQGCFGEV) and Lys-295. Asp-386 acts as the Proton acceptor in catalysis. The residue at position 416 (Tyr-416) is a Phosphotyrosine; by autocatalysis.

This sequence belongs to the protein kinase superfamily. Tyr protein kinase family. SRC subfamily. Post-translationally, the phosphorylated form is termed pp60v-src.

The enzyme catalyses L-tyrosyl-[protein] + ATP = O-phospho-L-tyrosyl-[protein] + ADP + H(+). Its function is as follows. This phosphoprotein, required for both the initiation and the maintenance of neoplastic transformation, is a protein kinase that catalyzes the phosphorylation of tyrosine residues in vitro. The sequence is that of Tyrosine-protein kinase transforming protein Src (V-SRC) from Galliformes.